The chain runs to 129 residues: Lysozyme C (129 aa).

The 129-residue stretch at 1–129 folds into the C-type lysozyme domain; that stretch reads KIYTRCELAA…VSKWIKDCKL (129 aa). 4 cysteine pairs are disulfide-bonded: C6-C127, C30-C115, C64-C80, and C76-C94. Residues E35 and D52 contribute to the active site.

This sequence belongs to the glycosyl hydrolase 22 family. Monomer.

It is found in the secreted. It carries out the reaction Hydrolysis of (1-&gt;4)-beta-linkages between N-acetylmuramic acid and N-acetyl-D-glucosamine residues in a peptidoglycan and between N-acetyl-D-glucosamine residues in chitodextrins.. Its function is as follows. Lysozymes have primarily a bacteriolytic function; those in tissues and body fluids are associated with the monocyte-macrophage system and enhance the activity of immunoagents. This Crax fasciolata (Bare-faced curassow) protein is Lysozyme C (LYZ).